The primary structure comprises 142 residues: Glia maturation factor gamma (142 aa).

S2 carries the N-acetylserine modification. Residues 4 to 139 (SLVVCDVDPE…NETWLKEKLA (136 aa)) enclose the ADF-H domain.

This sequence belongs to the actin-binding proteins ADF family. GMF subfamily. As to expression, expressed in rat thymus, testis, and spleen. Is present predominantly in proliferative and differentiative organs.

This chain is Glia maturation factor gamma (Gmfg), found in Rattus norvegicus (Rat).